We begin with the raw amino-acid sequence, 308 residues long: Aspartate carbamoyltransferase catalytic subunit (308 aa).

Arginine 57 and threonine 58 together coordinate carbamoyl phosphate. Lysine 86 contributes to the L-aspartate binding site. Positions 107, 135, and 138 each coordinate carbamoyl phosphate. Residues arginine 168 and arginine 228 each contribute to the L-aspartate site. Carbamoyl phosphate contacts are provided by leucine 267 and proline 268.

The protein belongs to the aspartate/ornithine carbamoyltransferase superfamily. ATCase family. Heterododecamer (2C3:3R2) of six catalytic PyrB chains organized as two trimers (C3), and six regulatory PyrI chains organized as three dimers (R2).

The catalysed reaction is carbamoyl phosphate + L-aspartate = N-carbamoyl-L-aspartate + phosphate + H(+). Its pathway is pyrimidine metabolism; UMP biosynthesis via de novo pathway; (S)-dihydroorotate from bicarbonate: step 2/3. Functionally, catalyzes the condensation of carbamoyl phosphate and aspartate to form carbamoyl aspartate and inorganic phosphate, the committed step in the de novo pyrimidine nucleotide biosynthesis pathway. The sequence is that of Aspartate carbamoyltransferase catalytic subunit from Leptospira borgpetersenii serovar Hardjo-bovis (strain JB197).